We begin with the raw amino-acid sequence, 151 residues long: UPF0756 membrane protein HS_0993 (151 aa).

4 consecutive transmembrane segments (helical) span residues 1 to 21 (MSLQ…LGVL), 52 to 72 (YGVN…IVSG), 81 to 101 (ALIH…AWFG), and 123 to 143 (ILGV…AGIL).

This sequence belongs to the UPF0756 family.

The protein resides in the cell membrane. The chain is UPF0756 membrane protein HS_0993 from Histophilus somni (strain 129Pt) (Haemophilus somnus).